The primary structure comprises 519 residues: GATA zinc finger domain-containing protein 8 (519 aa).

4 disordered regions span residues 25 to 182 (YSTG…SSSG), 198 to 249 (SNIN…SNNT), 273 to 359 (SNNM…NNKQ), and 431 to 453 (DERQQKKRMESDKNAEKREKRRE). The segment covering 37 to 156 (TNNSQNKTNN…SSSITSPSSN (120 aa)) has biased composition (low complexity). The segment covering 172 to 182 (SPNNKQVSSSG) has biased composition (polar residues). The segment covering 273–357 (SNNMNINNQH…SNINNNNNNN (85 aa)) has biased composition (low complexity). Residues 429–461 (KTDERQQKKRMESDKNAEKREKRREASRLLNNV) adopt a coiled-coil conformation. Residues 462 to 487 (CRNCKTTETPEWRKGPDGTKSLCNAC) form a GATA-type zinc finger.

The polypeptide is GATA zinc finger domain-containing protein 8 (gtaH) (Dictyostelium discoideum (Social amoeba)).